The following is a 147-amino-acid chain: UPF0208 membrane protein CGSHiEE_06015 (147 aa).

Transmembrane regions (helical) follow at residues 38 to 58 (FAQK…QIYA) and 67 to 87 (IAIL…YWLG).

Belongs to the UPF0208 family.

The protein localises to the cell inner membrane. The sequence is that of UPF0208 membrane protein CGSHiEE_06015 from Haemophilus influenzae (strain PittEE).